The chain runs to 209 residues: Claudin-4 (209 aa).

The Cytoplasmic segment spans residues 1–9 (MASMGLQVM). The segment at 1–103 (MASMGLQVMG…GVLLSVVGGK (103 aa)) is interaction with EPHA2. Residues 10 to 30 (GIALAVLGWLGAILSCALPMW) form a helical membrane-spanning segment. Residues 31 to 81 (RVTAFIGSNIVTSQTIWEGLWMNCVVQSTGQMQCKVYDSLLALPQDLQAAR) are Extracellular-facing. Cysteines 54 and 64 form a disulfide. A helical transmembrane segment spans residues 82–102 (ALIVICIILAVFGVLLSVVGG). The Cytoplasmic portion of the chain corresponds to 103-117 (KCTNCVDDESSKAKI). A helical membrane pass occupies residues 118–138 (MIVAGVVFLLAGLLVMVPVSW). Residues 139-160 (TANNVIRDFYNPLVASGQKREM) are Extracellular-facing. A helical transmembrane segment spans residues 161–181 (GASLYVGWAAAGLLILGGALL). The Cytoplasmic segment spans residues 182-209 (CFNCPPRNDKPYSAKYSAARSAPASNYV). Tyr-208 carries the post-translational modification Phosphotyrosine; by EPHA2. Positions 208 to 209 (YV) are interactions with TJP1, TJP2 and TJP3.

It belongs to the claudin family. In terms of assembly, interacts with EPHA2; phosphorylates CLDN4 and may regulate tight junctions. Directly interacts with TJP1/ZO-1, TJP2/ZO-2 and TJP3/ZO-3. Interacts with CLDN1. Interacts with CLDN8. Phosphorylated. Phosphorylation by EPHA2 is stimulated by EFNA1 and alters interaction with TJP1.

Its subcellular location is the cell junction. It is found in the tight junction. The protein resides in the cell membrane. Functionally, channel-forming tight junction protein that mediates paracellular chloride transport in the kidney. Plays a critical role in the paracellular reabsorption of filtered chloride in the kidney collecting ducts. Claudins play a major role in tight junction-specific obliteration of the intercellular space, through calcium-independent cell-adhesion activity. This Bos taurus (Bovine) protein is Claudin-4 (CLDN4).